A 501-amino-acid polypeptide reads, in one-letter code: Glycerol kinase (501 aa).

ADP is bound at residue Thr12. Thr12, Thr13, and Ser14 together coordinate ATP. Position 12 (Thr12) interacts with sn-glycerol 3-phosphate. Residue Arg16 participates in ADP binding. Residues Arg82, Glu83, Tyr135, and Asp244 each contribute to the sn-glycerol 3-phosphate site. Glycerol is bound by residues Arg82, Glu83, Tyr135, Asp244, and Gln245. Residues Thr266, Gly309, Gly409, and Asn413 each contribute to the ADP site. ATP-binding residues include Thr266, Gly309, and Gly409.

This sequence belongs to the FGGY kinase family.

It catalyses the reaction glycerol + ATP = sn-glycerol 3-phosphate + ADP + H(+). The protein operates within polyol metabolism; glycerol degradation via glycerol kinase pathway; sn-glycerol 3-phosphate from glycerol: step 1/1. Its activity is regulated as follows. Inhibited by fructose 1,6-bisphosphate (FBP). Key enzyme in the regulation of glycerol uptake and metabolism. Catalyzes the phosphorylation of glycerol to yield sn-glycerol 3-phosphate. This chain is Glycerol kinase, found in Coxiella burnetii (strain RSA 331 / Henzerling II).